The sequence spans 381 residues: Creatine kinase M-type (381 aa).

The region spanning 11 to 98 is the Phosphagen kinase N-terminal domain; sequence KLNYSAAEEF…FDPVIEDRHG (88 aa). The 243-residue stretch at 125–367 folds into the Phosphagen kinase C-terminal domain; the sequence is YVLSSRVRTG…KLMVEMEKRL (243 aa). ATP contacts are provided by residues 128–132, His-191, Arg-236, Arg-292, 320–325, and Asp-335; these read SSRVR and RGTGGV.

Belongs to the ATP:guanido phosphotransferase family. Dimer of identical or non-identical chains. With MM being the major form in skeletal muscle and myocardium, MB existing in myocardium, and BB existing in many tissues, especially brain.

It is found in the cytoplasm. It catalyses the reaction creatine + ATP = N-phosphocreatine + ADP + H(+). In terms of biological role, reversibly catalyzes the transfer of phosphate between ATP and various phosphogens (e.g. creatine phosphate). Creatine kinase isoenzymes play a central role in energy transduction in tissues with large, fluctuating energy demands, such as skeletal muscle, heart, brain and spermatozoa. This Torpedo marmorata (Marbled electric ray) protein is Creatine kinase M-type.